The sequence spans 177 residues: Thymidine kinase (177 aa).

11-18 lines the ATP pocket; sequence GPMFSGKS. The active-site Proton acceptor is the Glu83. Phe113 contributes to the substrate binding site. Zn(2+)-binding residues include Cys138 and Cys141. 157-161 is a substrate binding site; the sequence is IEIIG. Zn(2+)-binding residues include Cys170 and Cys173.

Belongs to the thymidine kinase family. In terms of assembly, homotetramer. Two molecules of substrate bind to each enzyme tetramer.

It carries out the reaction thymidine + ATP = dTMP + ADP + H(+). Phosphorylates thymidine and thymidine analogs, such as azidothymidine (AZT). Part of the salvage pathway for pyrimidine deoxyribonucleotide synthesis. The chain is Thymidine kinase (OPG101) from Cynomys gunnisoni (Gunnison's prairie dog).